A 92-amino-acid chain; its full sequence is Small ribosomal subunit protein uS19 (92 aa).

Belongs to the universal ribosomal protein uS19 family.

Its function is as follows. Protein S19 forms a complex with S13 that binds strongly to the 16S ribosomal RNA. The protein is Small ribosomal subunit protein uS19 of Corynebacterium aurimucosum (strain ATCC 700975 / DSM 44827 / CIP 107346 / CN-1) (Corynebacterium nigricans).